We begin with the raw amino-acid sequence, 300 residues long: ClpXP adapter protein SpxH (300 aa).

Belongs to the SpxH family. As to quaternary structure, interacts with Spx.

It is found in the cytoplasm. Its function is as follows. Adapter protein required for efficient degradation of Spx by ClpXP under non-stress conditions. Interaction with Spx stabilizes Spx and exposes the C-terminus of Spx for recognition and proteolysis by ClpXP. The sequence is that of ClpXP adapter protein SpxH from Bacillus licheniformis (strain ATCC 14580 / DSM 13 / JCM 2505 / CCUG 7422 / NBRC 12200 / NCIMB 9375 / NCTC 10341 / NRRL NRS-1264 / Gibson 46).